A 363-amino-acid chain; its full sequence is MPVLLDPENALALDVLLAGTDAQGLDWHLSAPDAADLPRIRGIGTLSSAGSEEISFLSNPRYQNQLATTRAAAVIVTPDVAQARQEQGASGHVLVVCKHPYLLYARLAQWFERASRPAGPAGVHPSAVVDPSAEIDADARVGAQCVIEAGARIGRGARLGPGCVIGAGSTVGADSLLHPRVTLYAGVHVGERAIIHSGAVLGADGFGFAPDPTLGRGAWGKIPQLGGVRVGNDVEIGANTTIDRGALDDTIVGDGVKLDNQIMVAHNVRIGAHTAIAACVGIAGSTTIGERCTIGGASMLSGHLAIADDVNISGGTAVTSNIAKAGRYTGVYPYAEHSEWQRNAAVIQQLALLRRRLRALERE.

The Proton acceptor role is filled by histidine 266.

This sequence belongs to the transferase hexapeptide repeat family. LpxD subfamily. In terms of assembly, homotrimer.

It catalyses the reaction a UDP-3-O-[(3R)-3-hydroxyacyl]-alpha-D-glucosamine + a (3R)-hydroxyacyl-[ACP] = a UDP-2-N,3-O-bis[(3R)-3-hydroxyacyl]-alpha-D-glucosamine + holo-[ACP] + H(+). It functions in the pathway bacterial outer membrane biogenesis; LPS lipid A biosynthesis. Its function is as follows. Catalyzes the N-acylation of UDP-3-O-acylglucosamine using 3-hydroxyacyl-ACP as the acyl donor. Is involved in the biosynthesis of lipid A, a phosphorylated glycolipid that anchors the lipopolysaccharide to the outer membrane of the cell. This Bordetella bronchiseptica (strain ATCC BAA-588 / NCTC 13252 / RB50) (Alcaligenes bronchisepticus) protein is UDP-3-O-acylglucosamine N-acyltransferase.